We begin with the raw amino-acid sequence, 297 residues long: Ribosomal RNA small subunit methyltransferase H (297 aa).

S-adenosyl-L-methionine is bound by residues 34–36, aspartate 54, phenylalanine 81, aspartate 99, and glutamine 106; that span reads GGH.

Belongs to the methyltransferase superfamily. RsmH family.

The protein localises to the cytoplasm. It catalyses the reaction cytidine(1402) in 16S rRNA + S-adenosyl-L-methionine = N(4)-methylcytidine(1402) in 16S rRNA + S-adenosyl-L-homocysteine + H(+). In terms of biological role, specifically methylates the N4 position of cytidine in position 1402 (C1402) of 16S rRNA. This chain is Ribosomal RNA small subunit methyltransferase H, found in Chlamydia pneumoniae (Chlamydophila pneumoniae).